The chain runs to 229 residues: Large ribosomal subunit protein uL1 (229 aa).

It belongs to the universal ribosomal protein uL1 family. In terms of assembly, part of the 50S ribosomal subunit.

In terms of biological role, binds directly to 23S rRNA. The L1 stalk is quite mobile in the ribosome, and is involved in E site tRNA release. Its function is as follows. Protein L1 is also a translational repressor protein, it controls the translation of the L11 operon by binding to its mRNA. This is Large ribosomal subunit protein uL1 from Chlorobium luteolum (strain DSM 273 / BCRC 81028 / 2530) (Pelodictyon luteolum).